The chain runs to 298 residues: Ethylmalonyl-CoA decarboxylase (298 aa).

Belongs to the enoyl-CoA hydratase/isomerase family.

It localises to the cytoplasm. The protein resides in the cytosol. It catalyses the reaction (2S)-ethylmalonyl-CoA + H(+) = butanoyl-CoA + CO2. It carries out the reaction (S)-methylmalonyl-CoA + H(+) = propanoyl-CoA + CO2. The enzyme catalyses (2R)-ethylmalonyl-CoA + H(+) = butanoyl-CoA + CO2. In terms of biological role, decarboxylates ethylmalonyl-CoA, a potentially toxic metabolite, to form butyryl-CoA, suggesting it might be involved in metabolite proofreading. Acts preferentially on (S)-ethylmalonyl-CoA but also has some activity on the (R)-isomer. Also has methylmalonyl-CoA decarboxylase activity at lower level. The polypeptide is Ethylmalonyl-CoA decarboxylase (ECHDC1) (Gallus gallus (Chicken)).